Here is a 240-residue protein sequence, read N- to C-terminus: Uridylate kinase (240 aa).

12–15 is a binding site for ATP; it reads KLSG. An involved in allosteric activation by GTP region spans residues 20–25; sequence GDQGKG. Glycine 54 provides a ligand contact to UMP. Residues glycine 55 and arginine 59 each contribute to the ATP site. Residues aspartate 74 and 135–142 each bind UMP; that span reads TGSPYFST. Residues asparagine 163, tyrosine 169, and aspartate 172 each contribute to the ATP site.

Belongs to the UMP kinase family. In terms of assembly, homohexamer.

It is found in the cytoplasm. It catalyses the reaction UMP + ATP = UDP + ADP. It functions in the pathway pyrimidine metabolism; CTP biosynthesis via de novo pathway; UDP from UMP (UMPK route): step 1/1. Its activity is regulated as follows. Allosterically activated by GTP. Inhibited by UTP. In terms of biological role, catalyzes the reversible phosphorylation of UMP to UDP. This Ligilactobacillus salivarius (strain UCC118) (Lactobacillus salivarius) protein is Uridylate kinase.